We begin with the raw amino-acid sequence, 194 residues long: Probable nicotinate-nucleotide adenylyltransferase (194 aa).

It belongs to the NadD family.

The catalysed reaction is nicotinate beta-D-ribonucleotide + ATP + H(+) = deamido-NAD(+) + diphosphate. It functions in the pathway cofactor biosynthesis; NAD(+) biosynthesis; deamido-NAD(+) from nicotinate D-ribonucleotide: step 1/1. In terms of biological role, catalyzes the reversible adenylation of nicotinate mononucleotide (NaMN) to nicotinic acid adenine dinucleotide (NaAD). In Brucella suis biovar 1 (strain 1330), this protein is Probable nicotinate-nucleotide adenylyltransferase.